The chain runs to 257 residues: UPF0246 protein Shew185_1115 (257 aa).

It belongs to the UPF0246 family.

This Shewanella baltica (strain OS185) protein is UPF0246 protein Shew185_1115.